The sequence spans 337 residues: tRNA N6-adenosine threonylcarbamoyltransferase (337 aa).

Fe cation is bound by residues histidine 111 and histidine 115. Residues 134-138, aspartate 167, glycine 180, and asparagine 272 each bind substrate; that span reads LVSGG. Aspartate 300 provides a ligand contact to Fe cation.

This sequence belongs to the KAE1 / TsaD family. It depends on Fe(2+) as a cofactor.

It is found in the cytoplasm. The enzyme catalyses L-threonylcarbamoyladenylate + adenosine(37) in tRNA = N(6)-L-threonylcarbamoyladenosine(37) in tRNA + AMP + H(+). Its function is as follows. Required for the formation of a threonylcarbamoyl group on adenosine at position 37 (t(6)A37) in tRNAs that read codons beginning with adenine. Is involved in the transfer of the threonylcarbamoyl moiety of threonylcarbamoyl-AMP (TC-AMP) to the N6 group of A37, together with TsaE and TsaB. TsaD likely plays a direct catalytic role in this reaction. The sequence is that of tRNA N6-adenosine threonylcarbamoyltransferase from Enterobacter sp. (strain 638).